The following is a 471-amino-acid chain: Retinoic acid receptor RXR-beta-A (471 aa).

The tract at residues Met-1 to Met-34 is disordered. Positions Met-1–Lys-102 are modulating. Over residues Pro-10 to Pro-25 the composition is skewed to low complexity. The segment at residues Lys-122 to Asp-197 is a DNA-binding region (nuclear receptor). 2 NR C4-type zinc fingers span residues Cys-125 to Cys-145 and Cys-161 to Cys-185. Residues Gln-196–Glu-216 show a composition bias toward basic and acidic residues. The disordered stretch occupies residues Gln-196 to Glu-226. A hinge region spans residues Glu-198 to Ser-221. The 244-residue stretch at Asn-224–Pro-467 folds into the NR LBD domain.

It belongs to the nuclear hormone receptor family. NR2 subfamily. In terms of assembly, homodimer. Heterodimer; with a rar molecule. Binds DNA preferentially as a rar/rxr heterodimer. Heterodimerizes with rarga. As to expression, shows uniform expression from the blastula to mid-gastrula stages. At 12 hours post-fertilization (hpf), expressed ubiquitously but more weakly. At 24 hpf, restricted to the ventral diencephalon, pharangeal endoderm and trunk and tail mesoderm; mesoderm expression is in medial cells of each somite along the dorsoventral axis, forming stripes. At 48 hpf, expressed in forebrain, eye, midbrain and anterior hindbrain.

The protein resides in the nucleus. Its function is as follows. Receptor for retinoic acid. Retinoic acid receptors bind as heterodimers to their target response elements in response to their ligands, all-trans or 9-cis retinoic acid, and regulate gene expression in various biological processes. The rar/rxr heterodimers bind to the retinoic acid response elements (RARE) composed of tandem 5'-AGGTCA-3' sites known as DR1-DR5. The high affinity ligand for rxrs is 9-cis retinoic acid. This chain is Retinoic acid receptor RXR-beta-A (rxrba), found in Danio rerio (Zebrafish).